A 622-amino-acid chain; its full sequence is Fanconi anemia group G protein (622 aa).

S7 is subject to Phosphoserine. TPR repeat units lie at residues 246–279 (VQVY…GSAW), 344–377 (SQTK…LLDS), 453–486 (SATH…LFRA), and 514–547 (AAAL…CPGN).

Belongs to the multisubunit FA complex composed of FANCA, FANCB, FANCC, FANCE, FANCF, FANCG, FANCL/PHF9 and FANCM. The complex is not found in FA patients. In complex with FANCF, FANCA and FANCL, but not with FANCC, nor FANCE, interacts with HES1; this interaction may be essential for the stability and nuclear localization of FA core complex proteins. The complex with FANCC and FANCG may also include EIF2AK2 and HSP70. When phosphorylated at Ser-7, forms a complex with BRCA2, FANCD2 and XRCC3. Highly expressed in testis and thymus. Found in lymphoblasts.

The protein localises to the nucleus. It is found in the cytoplasm. Its function is as follows. DNA repair protein that may operate in a postreplication repair or a cell cycle checkpoint function. May be implicated in interstrand DNA cross-link repair and in the maintenance of normal chromosome stability. Candidate tumor suppressor gene. The chain is Fanconi anemia group G protein (FANCG) from Homo sapiens (Human).